The primary structure comprises 298 residues: GTPase Era (298 aa).

Residues 8–176 (HCGSVAVIGR…VRDVLALLPE (169 aa)) form the Era-type G domain. A G1 region spans residues 16 to 23 (GRPNVGKS). Position 16-23 (16-23 (GRPNVGKS)) interacts with GTP. The interval 42-46 (QTTRH) is G2. Positions 63–66 (DTPG) are G3. GTP contacts are provided by residues 63 to 67 (DTPGL) and 125 to 128 (NKID). Positions 125-128 (NKID) are G4. Residues 155–157 (ISA) form a G5 region. In terms of domain architecture, KH type-2 spans 199-283 (VREQLMRQLG…FLETWVRVRE (85 aa)).

This sequence belongs to the TRAFAC class TrmE-Era-EngA-EngB-Septin-like GTPase superfamily. Era GTPase family. In terms of assembly, monomer.

It localises to the cytoplasm. The protein localises to the cell inner membrane. Functionally, an essential GTPase that binds both GDP and GTP, with rapid nucleotide exchange. Plays a role in 16S rRNA processing and 30S ribosomal subunit biogenesis and possibly also in cell cycle regulation and energy metabolism. The chain is GTPase Era from Stenotrophomonas maltophilia (strain R551-3).